Reading from the N-terminus, the 181-residue chain is Oleosin (181 aa).

A disordered region spans residues 1 to 28; it reads TTTTYDRHFTTTQPHYRQDDRSRYDQQT. The tract at residues 1–38 is polar; that stretch reads TTTTYDRHFTTTQPHYRQDDRSRYDQQTHSQSTSRTLA. Residues 16–26 show a composition bias toward basic and acidic residues; it reads YRQDDRSRYDQ. The next 3 membrane-spanning stretches (helical) occupy residues 38–58, 69–89, and 90–110; these read AIIA…LTFI, PLFV…GLAV, and TGFL…SYLF. Residues 39 to 110 are hydrophobic; sequence IIALLPVGGI…TGLSSLSYLF (72 aa). Residues 155 to 181 are disordered; the sequence is EMGDQGQVGVHAQVGGGKEGRKSGDRT. Low complexity predominate over residues 158–167; the sequence is DQGQVGVHAQ. The span at 172 to 181 shows a compositional bias: basic and acidic residues; it reads KEGRKSGDRT.

It belongs to the oleosin family.

The protein localises to the lipid droplet. It localises to the membrane. In terms of biological role, may have a structural role to stabilize the lipid body during desiccation of the seed by preventing coalescence of the oil. Probably interacts with both lipid and phospholipid moieties of lipid bodies. May also provide recognition signals for specific lipase anchorage in lipolysis during seedling growth. This is Oleosin from Helianthus annuus (Common sunflower).